The following is a 728-amino-acid chain: Elongation factor 2 (728 aa).

Positions 19-261 (EQIRNIAIAA…MVAEHFPNPI (243 aa)) constitute a tr-type G domain. Residues 28-35 (AHVDHGKT), 94-98 (DTPGH), and 148-151 (NKVD) contribute to the GTP site. H596 is modified (diphthamide).

The protein belongs to the TRAFAC class translation factor GTPase superfamily. Classic translation factor GTPase family. EF-G/EF-2 subfamily.

It localises to the cytoplasm. Its function is as follows. Catalyzes the GTP-dependent ribosomal translocation step during translation elongation. During this step, the ribosome changes from the pre-translocational (PRE) to the post-translocational (POST) state as the newly formed A-site-bound peptidyl-tRNA and P-site-bound deacylated tRNA move to the P and E sites, respectively. Catalyzes the coordinated movement of the two tRNA molecules, the mRNA and conformational changes in the ribosome. The protein is Elongation factor 2 of Halobacterium salinarum (strain ATCC 29341 / DSM 671 / R1).